Here is a 441-residue protein sequence, read N- to C-terminus: Vacuolar cation/proton exchanger 5 (441 aa).

The N-myristoyl glycine moiety is linked to residue glycine 2. Residues 2 to 69 (GCCKVPALIQ…PNNSVLQSFK (68 aa)) lie on the Cytoplasmic side of the membrane. S-palmitoyl cysteine attachment occurs at residues cysteine 3 and cysteine 4. A helical transmembrane segment spans residues 70-90 (IVILSNKLNLLLPFGPLAILL). The Extracellular segment spans residues 91 to 97 (HYLTDNK). A helical membrane pass occupies residues 98–118 (GWIFLLSLVGITPLAERLGYA). At 119-129 (TEQLACYTGST) the chain is on the cytoplasmic side. A helical membrane pass occupies residues 130–150 (VGGLLNATFGNVTELIISIFA). The interval 139–174 (GNVTELIISIFALKSGMIRVVQLTLLGSILSNMLLV) is cation selection. The Extracellular segment spans residues 151–165 (LKSGMIRVVQLTLLG). The helical transmembrane segment at 166–186 (SILSNMLLVLGCAFFCGGLVF) threads the bilayer. Residues 187 to 197 (SQKEQVFDKGN) lie on the Cytoplasmic side of the membrane. Residues 198–218 (AVVNSGLLLMAVMGLLFPAVL) form a helical membrane-spanning segment. Residues 219–231 (HYTHSEVHAGSSE) lie on the Extracellular side of the membrane. Residues 232 to 252 (LALSRFSSCIMLVAYAAYLFF) traverse the membrane as a helical segment. At 253–286 (QLKSQPSSYTPLTEETNQNEETSDDDEDPEISKW) the chain is on the cytoplasmic side. Residues 287 to 307 (EAIIWLSILTAWVSLLSGYLV) form a helical membrane-spanning segment. Topologically, residues 308-311 (DAIE) are extracellular. Residues 312-332 (GASVSWKIPISFISVILLPIV) form a helical membrane-spanning segment. Topologically, residues 333–354 (GNAAEHAGAIMFAMKDKLDLSL) are cytoplasmic. Residues 333–368 (GNAAEHAGAIMFAMKDKLDLSLGVAIGSSIQISMFA) form a cation selection region. Residues 355 to 375 (GVAIGSSIQISMFAVPFCVVI) traverse the membrane as a helical segment. The Extracellular segment spans residues 376–384 (GWMMGAQMD). The helical transmembrane segment at 385–405 (LNFQLFETATLFITVIVVAFF) threads the bilayer. At 406-412 (LQEGTSN) the chain is on the cytoplasmic side. The helical transmembrane segment at 413 to 433 (YFKGLMLILCYLIVAASFFVH) threads the bilayer. The Extracellular segment spans residues 434 to 441 (EDPHQDDI).

The protein belongs to the Ca(2+):cation antiporter (CaCA) (TC 2.A.19) family. Cation/proton exchanger (CAX) subfamily.

The protein localises to the vacuole membrane. Its function is as follows. Vacuolar cation/proton exchanger (CAX). Translocates Ca(2+) and other metal ions into vacuoles using the proton gradient formed by H(+)-ATPase and H(+)-pyrophosphatase. The protein is Vacuolar cation/proton exchanger 5 (CAX5) of Arabidopsis thaliana (Mouse-ear cress).